Consider the following 247-residue polypeptide: MSNLLLALNIDHIATVRNARGTQYPDPVYAAYIAEQSGIDGITVHLREDRRHITDRDVKLLREIVQTTMNLEMAATDEMVMIACQLKPHYCCLVPERRRELTTEGGLDLIYQIDKMQNIVLKLSDAGIRVSLFIDPDIEQIDASYKIGVRCIELNTGKYAESKNKEDRILEYRRIEKSIKHALSYGLMINAGHGLNYDNVKFIAMLSQIRELNIGHAIVSRAVFCGLPKAIKDMKELLKEFRKKDDQ.

Asn9 serves as a coordination point for 3-amino-2-oxopropyl phosphate. 11–12 (DH) serves as a coordination point for 1-deoxy-D-xylulose 5-phosphate. Arg20 is a binding site for 3-amino-2-oxopropyl phosphate. His45 acts as the Proton acceptor in catalysis. The 1-deoxy-D-xylulose 5-phosphate site is built by Arg47 and His52. The Proton acceptor role is filled by Glu72. Residue Thr102 participates in 1-deoxy-D-xylulose 5-phosphate binding. Residue His193 is the Proton donor of the active site. Residues Gly194 and 215-216 (GH) contribute to the 3-amino-2-oxopropyl phosphate site.

It belongs to the PNP synthase family. As to quaternary structure, homooctamer; tetramer of dimers.

The protein localises to the cytoplasm. It carries out the reaction 3-amino-2-oxopropyl phosphate + 1-deoxy-D-xylulose 5-phosphate = pyridoxine 5'-phosphate + phosphate + 2 H2O + H(+). It participates in cofactor biosynthesis; pyridoxine 5'-phosphate biosynthesis; pyridoxine 5'-phosphate from D-erythrose 4-phosphate: step 5/5. Its function is as follows. Catalyzes the complicated ring closure reaction between the two acyclic compounds 1-deoxy-D-xylulose-5-phosphate (DXP) and 3-amino-2-oxopropyl phosphate (1-amino-acetone-3-phosphate or AAP) to form pyridoxine 5'-phosphate (PNP) and inorganic phosphate. This is Pyridoxine 5'-phosphate synthase from Blochmanniella floridana.